Consider the following 181-residue polypeptide: Large ribosomal subunit protein uL5 (181 aa).

The protein belongs to the universal ribosomal protein uL5 family. Part of the 50S ribosomal subunit; part of the 5S rRNA/L5/L18/L25 subcomplex. Contacts the 5S rRNA and the P site tRNA. Forms a bridge to the 30S subunit in the 70S ribosome.

Its function is as follows. This is one of the proteins that bind and probably mediate the attachment of the 5S RNA into the large ribosomal subunit, where it forms part of the central protuberance. In the 70S ribosome it contacts protein S13 of the 30S subunit (bridge B1b), connecting the 2 subunits; this bridge is implicated in subunit movement. Contacts the P site tRNA; the 5S rRNA and some of its associated proteins might help stabilize positioning of ribosome-bound tRNAs. The sequence is that of Large ribosomal subunit protein uL5 from Helicobacter pylori (strain J99 / ATCC 700824) (Campylobacter pylori J99).